Here is a 229-residue protein sequence, read N- to C-terminus: Large ribosomal subunit protein uL1 (229 aa).

This sequence belongs to the universal ribosomal protein uL1 family. In terms of assembly, part of the 50S ribosomal subunit.

Binds directly to 23S rRNA. The L1 stalk is quite mobile in the ribosome, and is involved in E site tRNA release. Its function is as follows. Protein L1 is also a translational repressor protein, it controls the translation of the L11 operon by binding to its mRNA. This chain is Large ribosomal subunit protein uL1, found in Caulobacter sp. (strain K31).